A 292-amino-acid chain; its full sequence is Acetyl-coenzyme A carboxylase carboxyl transferase subunit beta (292 aa).

The CoA carboxyltransferase N-terminal domain occupies 23–292; sequence VWSKCTACGN…TEATEVSVNE (270 aa). 4 residues coordinate Zn(2+): Cys27, Cys30, Cys46, and Cys49. The C4-type zinc-finger motif lies at 27 to 49; sequence CTACGNIIYKADLERSLNVCPKC.

It belongs to the AccD/PCCB family. As to quaternary structure, acetyl-CoA carboxylase is a heterohexamer composed of biotin carboxyl carrier protein (AccB), biotin carboxylase (AccC) and two subunits each of ACCase subunit alpha (AccA) and ACCase subunit beta (AccD). Zn(2+) is required as a cofactor.

It is found in the cytoplasm. The catalysed reaction is N(6)-carboxybiotinyl-L-lysyl-[protein] + acetyl-CoA = N(6)-biotinyl-L-lysyl-[protein] + malonyl-CoA. It participates in lipid metabolism; malonyl-CoA biosynthesis; malonyl-CoA from acetyl-CoA: step 1/1. Component of the acetyl coenzyme A carboxylase (ACC) complex. Biotin carboxylase (BC) catalyzes the carboxylation of biotin on its carrier protein (BCCP) and then the CO(2) group is transferred by the transcarboxylase to acetyl-CoA to form malonyl-CoA. The polypeptide is Acetyl-coenzyme A carboxylase carboxyl transferase subunit beta (Idiomarina loihiensis (strain ATCC BAA-735 / DSM 15497 / L2-TR)).